A 294-amino-acid chain; its full sequence is Lipoyl synthase 1 (294 aa).

[4Fe-4S] cluster-binding residues include Cys38, Cys43, Cys49, Cys64, Cys68, Cys71, and Ser279. The region spanning 50 to 268 is the Radical SAM core domain; the sequence is FAGGTATFLI…EEGQTRFGFL (219 aa).

It belongs to the radical SAM superfamily. Lipoyl synthase family. The cofactor is [4Fe-4S] cluster.

Its subcellular location is the cytoplasm. It catalyses the reaction [[Fe-S] cluster scaffold protein carrying a second [4Fe-4S](2+) cluster] + N(6)-octanoyl-L-lysyl-[protein] + 2 oxidized [2Fe-2S]-[ferredoxin] + 2 S-adenosyl-L-methionine + 4 H(+) = [[Fe-S] cluster scaffold protein] + N(6)-[(R)-dihydrolipoyl]-L-lysyl-[protein] + 4 Fe(3+) + 2 hydrogen sulfide + 2 5'-deoxyadenosine + 2 L-methionine + 2 reduced [2Fe-2S]-[ferredoxin]. It participates in protein modification; protein lipoylation via endogenous pathway; protein N(6)-(lipoyl)lysine from octanoyl-[acyl-carrier-protein]: step 2/2. Catalyzes the radical-mediated insertion of two sulfur atoms into the C-6 and C-8 positions of the octanoyl moiety bound to the lipoyl domains of lipoate-dependent enzymes, thereby converting the octanoylated domains into lipoylated derivatives. In Prochlorococcus marinus (strain SARG / CCMP1375 / SS120), this protein is Lipoyl synthase 1.